Here is a 376-residue protein sequence, read N- to C-terminus: Queuine tRNA-ribosyltransferase (376 aa).

The active-site Proton acceptor is Asp-89. Substrate-binding positions include 89 to 93 (DSGGF), Asp-143, Gln-194, and Gly-221. Residues 252–258 (GVGLPSN) form an RNA binding region. Asp-271 functions as the Nucleophile in the catalytic mechanism. Positions 276–280 (ARNGR) are RNA binding; important for wobble base 34 recognition. Residues Cys-309, Cys-311, Cys-314, and His-340 each coordinate Zn(2+).

This sequence belongs to the queuine tRNA-ribosyltransferase family. Homodimer. Within each dimer, one monomer is responsible for RNA recognition and catalysis, while the other monomer binds to the replacement base PreQ1. Requires Zn(2+) as cofactor.

The catalysed reaction is 7-aminomethyl-7-carbaguanine + guanosine(34) in tRNA = 7-aminomethyl-7-carbaguanosine(34) in tRNA + guanine. It participates in tRNA modification; tRNA-queuosine biosynthesis. Its function is as follows. Catalyzes the base-exchange of a guanine (G) residue with the queuine precursor 7-aminomethyl-7-deazaguanine (PreQ1) at position 34 (anticodon wobble position) in tRNAs with GU(N) anticodons (tRNA-Asp, -Asn, -His and -Tyr). Catalysis occurs through a double-displacement mechanism. The nucleophile active site attacks the C1' of nucleotide 34 to detach the guanine base from the RNA, forming a covalent enzyme-RNA intermediate. The proton acceptor active site deprotonates the incoming PreQ1, allowing a nucleophilic attack on the C1' of the ribose to form the product. After dissociation, two additional enzymatic reactions on the tRNA convert PreQ1 to queuine (Q), resulting in the hypermodified nucleoside queuosine (7-(((4,5-cis-dihydroxy-2-cyclopenten-1-yl)amino)methyl)-7-deazaguanosine). This Clostridium tetani (strain Massachusetts / E88) protein is Queuine tRNA-ribosyltransferase.